The sequence spans 345 residues: Phosphoribosylformylglycinamidine cyclo-ligase (345 aa).

It belongs to the AIR synthase family.

The protein localises to the cytoplasm. It catalyses the reaction 2-formamido-N(1)-(5-O-phospho-beta-D-ribosyl)acetamidine + ATP = 5-amino-1-(5-phospho-beta-D-ribosyl)imidazole + ADP + phosphate + H(+). The protein operates within purine metabolism; IMP biosynthesis via de novo pathway; 5-amino-1-(5-phospho-D-ribosyl)imidazole from N(2)-formyl-N(1)-(5-phospho-D-ribosyl)glycinamide: step 2/2. In Shewanella sediminis (strain HAW-EB3), this protein is Phosphoribosylformylglycinamidine cyclo-ligase.